Consider the following 234-residue polypeptide: Transmembrane protein 65 (234 aa).

A mitochondrion-targeting transit peptide spans 1–55 (MSRLLPLLGSRTARSLRPGPAAAPRLPSWCCCGRGLLALGVPGGPRLLGTHPKKE). Over 56 to 110 (PMEALNTAQGARDFIYSLHSTERSCLLKELHRFESIAIAQEKLEALPPTPGQLRY) the chain is Cytoplasmic. Residues 111–131 (VFFHNAIPFVGFGFLDNAIMI) traverse the membrane as a helical segment. The Extracellular segment spans residues 132–138 (VAGTQIE). Residues 139–159 (LSIGIILGISTMAAAALGNLV) traverse the membrane as a helical segment. The Cytoplasmic segment spans residues 160 to 203 (SDLAGLGLAGYVEALASRLGLSIPDLTPKQVDMWQTRVSTHLGK). Residues 204–224 (AVGVTIGCILGMFPLIFFGGS) form a helical membrane-spanning segment. The Extracellular portion of the chain corresponds to 225–234 (EEDEKLETTN).

In terms of assembly, monomer. Homodimer. Interacts with GJA1. Interacts weakly with DSP. Interacts with SCN1B. In terms of tissue distribution, predominantly expressed in the ventricular tissue (at protein level).

It localises to the cell membrane. It is found in the mitochondrion inner membrane. In terms of biological role, essential for maintaining proper cardiac intercalated disk (ICD) structure and function as well as cardiac conduction velocity in the heart. Its association with SCN1B is required for stabilizing the perinexus in the ICD and for localization of GJA1 and SCN5A to the ICD. May regulate the function of the gap junction protein GJA1 and may contribute to the stability and proper localization of GJA1 to cardiac intercalated disk thereby regulating gap junction communication. Regulates mitochondrial respiration and mitochondrial DNA copy number maintenance. This chain is Transmembrane protein 65 (Tmem65), found in Mus musculus (Mouse).